The primary structure comprises 641 residues: Fructose-1,6-bisphosphatase class 3 (641 aa).

Belongs to the FBPase class 3 family. Mn(2+) is required as a cofactor.

The catalysed reaction is beta-D-fructose 1,6-bisphosphate + H2O = beta-D-fructose 6-phosphate + phosphate. It participates in carbohydrate biosynthesis; gluconeogenesis. The chain is Fructose-1,6-bisphosphatase class 3 from Latilactobacillus sakei subsp. sakei (strain 23K) (Lactobacillus sakei subsp. sakei).